The following is a 210-amino-acid chain: Large ribosomal subunit protein uL4 (210 aa).

The tract at residues 46-85 (QGTASTLTRSEVRGGGRKPYKQKGTGRARQGSIRTPLRPG) is disordered. The segment covering 60–71 (GGRKPYKQKGTG) has biased composition (basic residues).

Belongs to the universal ribosomal protein uL4 family. As to quaternary structure, part of the 50S ribosomal subunit.

One of the primary rRNA binding proteins, this protein initially binds near the 5'-end of the 23S rRNA. It is important during the early stages of 50S assembly. It makes multiple contacts with different domains of the 23S rRNA in the assembled 50S subunit and ribosome. Functionally, forms part of the polypeptide exit tunnel. This Prochlorococcus marinus (strain AS9601) protein is Large ribosomal subunit protein uL4.